Reading from the N-terminus, the 293-residue chain is Formamidopyrimidine-DNA glycosylase (293 aa).

Residue Pro-2 is the Schiff-base intermediate with DNA of the active site. Residue Glu-3 is the Proton donor of the active site. Lys-58 acts as the Proton donor; for beta-elimination activity in catalysis. DNA-binding residues include His-104, Arg-123, and Lys-166. The segment at 257–293 adopts an FPG-type zinc-finger fold; it reads AAYDREGERCRTDGCGGAVKRFVQNGRSTFWCSGCQK. Arg-283 acts as the Proton donor; for delta-elimination activity in catalysis.

This sequence belongs to the FPG family. Monomer. Zn(2+) serves as cofactor.

The enzyme catalyses Hydrolysis of DNA containing ring-opened 7-methylguanine residues, releasing 2,6-diamino-4-hydroxy-5-(N-methyl)formamidopyrimidine.. The catalysed reaction is 2'-deoxyribonucleotide-(2'-deoxyribose 5'-phosphate)-2'-deoxyribonucleotide-DNA = a 3'-end 2'-deoxyribonucleotide-(2,3-dehydro-2,3-deoxyribose 5'-phosphate)-DNA + a 5'-end 5'-phospho-2'-deoxyribonucleoside-DNA + H(+). Its function is as follows. Involved in base excision repair of DNA damaged by oxidation or by mutagenic agents. Acts as a DNA glycosylase that recognizes and removes damaged bases. Has a preference for oxidized purines, such as 7,8-dihydro-8-oxoguanine (8-oxoG). Has AP (apurinic/apyrimidinic) lyase activity and introduces nicks in the DNA strand. Cleaves the DNA backbone by beta-delta elimination to generate a single-strand break at the site of the removed base with both 3'- and 5'-phosphates. This is Formamidopyrimidine-DNA glycosylase from Rhodopseudomonas palustris (strain BisB5).